We begin with the raw amino-acid sequence, 252 residues long: Ribosomal RNA small subunit methyltransferase J (252 aa).

S-adenosyl-L-methionine contacts are provided by residues 101 to 102 (RD), 117 to 118 (ER), 153 to 154 (SS), and Asp-171.

The protein belongs to the methyltransferase superfamily. RsmJ family.

The protein localises to the cytoplasm. It carries out the reaction guanosine(1516) in 16S rRNA + S-adenosyl-L-methionine = N(2)-methylguanosine(1516) in 16S rRNA + S-adenosyl-L-homocysteine + H(+). Its function is as follows. Specifically methylates the guanosine in position 1516 of 16S rRNA. The sequence is that of Ribosomal RNA small subunit methyltransferase J from Citrobacter koseri (strain ATCC BAA-895 / CDC 4225-83 / SGSC4696).